The following is a 477-amino-acid chain: UDP-N-acetylmuramate--L-alanine ligase (477 aa).

120 to 126 is a binding site for ATP; it reads GSHGKTT.

The protein belongs to the MurCDEF family.

It is found in the cytoplasm. The catalysed reaction is UDP-N-acetyl-alpha-D-muramate + L-alanine + ATP = UDP-N-acetyl-alpha-D-muramoyl-L-alanine + ADP + phosphate + H(+). Its pathway is cell wall biogenesis; peptidoglycan biosynthesis. In terms of biological role, cell wall formation. The protein is UDP-N-acetylmuramate--L-alanine ligase of Rickettsia canadensis (strain McKiel).